Here is a 760-residue protein sequence, read N- to C-terminus: Forkhead box protein M1 (760 aa).

2 disordered regions span residues 1–54 (MRTS…AESS) and 95–167 (GKES…SYAG). Composition is skewed to low complexity over residues 43–54 (PAQASQEVAESS) and 110–124 (SSGGPSSHPSQPQAH). The segment covering 125 to 134 (SSRDSKRAEV) has biased composition (basic and acidic residues). The segment covering 140-149 (GPKPAAKGVP) has biased composition (low complexity). Residues Lys199 and Lys323 each participate in a glycyl lysine isopeptide (Lys-Gly) (interchain with G-Cter in SUMO2) cross-link. The fork-head DNA-binding region spans 233-325 (ERPPYSYMAM…LTLDQVFKPL (93 aa)). The disordered stretch occupies residues 323–348 (KPLEPGSPQSPEHLESQQKRPNPELH). Ser329 bears the Phosphoserine mark. A compositionally biased stretch (basic and acidic residues) spans 334-348 (EHLESQQKRPNPELH). Lys354 is covalently cross-linked (Glycyl lysine isopeptide (Lys-Gly) (interchain with G-Cter in SUMO2)). Ser374 is subject to Phosphoserine; by CHEK2. Residues Lys420 and Lys438 each participate in a glycyl lysine isopeptide (Lys-Gly) (interchain with G-Cter in SUMO2) cross-link. Disordered stretches follow at residues 500 to 560 (SWED…PDLF), 577 to 635 (ESSE…LDFS), and 660 to 709 (PLKS…IPSL). At Ser521 the chain carries Phosphoserine. Basic and acidic residues predominate over residues 531 to 542 (VTKRREKREVSR). The span at 604 to 613 (PVSSTPSKSV) shows a compositional bias: polar residues. Residue Thr608 is modified to Phosphothreonine; by CDK1. Thr624 carries the post-translational modification Phosphothreonine. Phosphoserine; by PLK1 is present on residues Ser727 and Ser736.

Phosphorylated in M (mitotic) phase. Phosphorylation by the checkpoint kinase CHEK2 in response to DNA damage increases the FOXM1 protein stability probably stimulating the transcription of genes involved in DNA repair. Phosphorylated by CDK1 in late S and G2 phases, creating docking sites for the POLO box domains of PLK1. Subsequently, PLK1 binds and phosphorylates FOXM1, leading to activation of transcriptional activity and subsequent enhanced expression of key mitotic regulators. Phosphorylated by GSK3B leading to ubiquitination and proteasomal degradation. As to expression, expressed in fetal heart, brain, liver, lung, kidney and limb, but only in adult thymus. Appears to be expressed only in adult organs containing proliferating/cycling cells or in response to growth factors.

Its subcellular location is the nucleus. Transcription factor regulating the expression of cell cycle genes essential for DNA replication and mitosis. Plays a role in the control of cell proliferation. Also plays a role in DNA break repair, participating in the DNA damage checkpoint response. Promotes transcription of PHB2. This is Forkhead box protein M1 (Foxm1) from Mus musculus (Mouse).